Here is a 411-residue protein sequence, read N- to C-terminus: Arginine deiminase (411 aa).

The Amidino-cysteine intermediate role is filled by Cys-401.

This sequence belongs to the arginine deiminase family.

The protein localises to the cytoplasm. The catalysed reaction is L-arginine + H2O = L-citrulline + NH4(+). It participates in amino-acid degradation; L-arginine degradation via ADI pathway; carbamoyl phosphate from L-arginine: step 1/2. The sequence is that of Arginine deiminase from Streptococcus equi subsp. zooepidemicus (strain MGCS10565).